The primary structure comprises 432 residues: Enolase (432 aa).

Residue Gln167 coordinates (2R)-2-phosphoglycerate. The active-site Proton donor is Glu209. Mg(2+) contacts are provided by Asp246, Glu291, and Asp318. The (2R)-2-phosphoglycerate site is built by Lys343, Arg372, Ser373, and Lys394. Lys343 serves as the catalytic Proton acceptor.

This sequence belongs to the enolase family. Component of the RNA degradosome, a multiprotein complex involved in RNA processing and mRNA degradation. Requires Mg(2+) as cofactor.

The protein resides in the cytoplasm. The protein localises to the secreted. It is found in the cell surface. It carries out the reaction (2R)-2-phosphoglycerate = phosphoenolpyruvate + H2O. It participates in carbohydrate degradation; glycolysis; pyruvate from D-glyceraldehyde 3-phosphate: step 4/5. Functionally, catalyzes the reversible conversion of 2-phosphoglycerate (2-PG) into phosphoenolpyruvate (PEP). It is essential for the degradation of carbohydrates via glycolysis. The polypeptide is Enolase (Aliivibrio salmonicida (strain LFI1238) (Vibrio salmonicida (strain LFI1238))).